We begin with the raw amino-acid sequence, 1097 residues long: Leukemia inhibitory factor receptor (1097 aa).

Residues 1-44 form the signal peptide; it reads MMNISLRLRRPPWMVDSNGRRMTSHFQWLLLTFILLYLMNQVTS. Topologically, residues 45 to 833 are extracellular; the sequence is EKRGAPRDLK…SMFVVTKENS (789 aa). The Fibronectin type-III 1 domain maps to 46-131; that stretch reads KRGAPRDLKC…ISKFTLNEKN (86 aa). 2 disulfides stabilise this stretch: Cys-55–Cys-65 and Cys-82–Cys-90. Residues Asn-85, Asn-131, Asn-143, Asn-191, Asn-243, and Asn-303 are each glycosylated (N-linked (GlcNAc...) asparagine). Residues Cys-213 and Cys-270 are joined by a disulfide bond. Fibronectin type-III domains are found at residues 332–434, 435–534, 538–629, 627–719, and 724–833; these read PPDI…VYPR, IPTS…TEAI, GPDT…IPND, PNDD…IGYI, and PIVA…KENS. A disulfide bridge connects residues Cys-341 and Cys-351. N-linked (GlcNAc...) asparagine glycosylation is found at Asn-366, Asn-390, Asn-407, Asn-426, Asn-445, Asn-471, Asn-481, and Asn-489. Cys-466 and Cys-511 are oxidised to a cystine. A WSXWS motif motif is present at residues 519-523; that stretch reads WSKWS. Residues Asn-572, Asn-652, Asn-663, Asn-680, Asn-729, and Asn-787 are each glycosylated (N-linked (GlcNAc...) asparagine). Residues 834–854 form a helical membrane-spanning segment; that stretch reads VGLIIAILIPVAVAVIVGVVT. The Cytoplasmic segment spans residues 855–1097; sequence SILCYRKREW…TNFFQNKPND (243 aa). Residues 869–877 carry the Box 1 motif motif; the sequence is FYPDIPNPE. Ser-927 is modified (phosphoserine). Disordered regions lie at residues 982–1005 and 1022–1097; these read QPQA…KPQM and LDKA…KPND. 2 stretches are compositionally biased toward polar residues: residues 1032 to 1067 and 1086 to 1097; these read ANVN…NSRQ and SFTNFFQNKPND. Ser-1044 carries the post-translational modification Phosphoserine.

The protein belongs to the type I cytokine receptor family. Type 2 subfamily. In terms of assembly, heterodimer composed of LIFR and IL6ST. The heterodimer formed by LIFR and IL6ST interacts with the complex formed by CNTF and CNTFR.

The protein localises to the cell membrane. Functionally, signal-transducing molecule. May have a common pathway with IL6ST. The soluble form inhibits the biological activity of LIF by blocking its binding to receptors on target cells. The polypeptide is Leukemia inhibitory factor receptor (LIFR) (Canis lupus familiaris (Dog)).